We begin with the raw amino-acid sequence, 501 residues long: UDP-N-acetylmuramoyl-L-alanyl-D-glutamate--2,6-diaminopimelate ligase (501 aa).

UDP-N-acetyl-alpha-D-muramoyl-L-alanyl-D-glutamate-binding positions include Leu-26, Ser-28, and 43–45 (HQC). Residue 123-129 (GTNGKTT) participates in ATP binding. UDP-N-acetyl-alpha-D-muramoyl-L-alanyl-D-glutamate is bound by residues Asn-164, 165–166 (TT), Ser-192, Gln-198, and Arg-200. N6-carboxylysine is present on Lys-232. Meso-2,6-diaminopimelate-binding positions include Arg-398, 422–425 (DNPR), Gly-473, and Glu-477. Positions 422–425 (DNPR) match the Meso-diaminopimelate recognition motif motif.

The protein belongs to the MurCDEF family. MurE subfamily. It depends on Mg(2+) as a cofactor. In terms of processing, carboxylation is probably crucial for Mg(2+) binding and, consequently, for the gamma-phosphate positioning of ATP.

It is found in the cytoplasm. The catalysed reaction is UDP-N-acetyl-alpha-D-muramoyl-L-alanyl-D-glutamate + meso-2,6-diaminopimelate + ATP = UDP-N-acetyl-alpha-D-muramoyl-L-alanyl-gamma-D-glutamyl-meso-2,6-diaminopimelate + ADP + phosphate + H(+). Its pathway is cell wall biogenesis; peptidoglycan biosynthesis. In terms of biological role, catalyzes the addition of meso-diaminopimelic acid to the nucleotide precursor UDP-N-acetylmuramoyl-L-alanyl-D-glutamate (UMAG) in the biosynthesis of bacterial cell-wall peptidoglycan. This chain is UDP-N-acetylmuramoyl-L-alanyl-D-glutamate--2,6-diaminopimelate ligase, found in Haemophilus ducreyi (strain 35000HP / ATCC 700724).